The chain runs to 483 residues: Probable 4-aminobutyrate aminotransferase, mitochondrial (483 aa).

A pyridoxal 5'-phosphate-binding site is contributed by Gly-148 to Thr-149. Arg-204 contacts substrate. Lys-341 is modified (N6-(pyridoxal phosphate)lysine). Thr-365 provides a ligand contact to pyridoxal 5'-phosphate.

It belongs to the class-III pyridoxal-phosphate-dependent aminotransferase family. As to quaternary structure, homodimer. Requires pyridoxal 5'-phosphate as cofactor.

It localises to the mitochondrion matrix. The catalysed reaction is 4-aminobutanoate + 2-oxoglutarate = succinate semialdehyde + L-glutamate. The enzyme catalyses (S)-3-amino-2-methylpropanoate + 2-oxoglutarate = 2-methyl-3-oxopropanoate + L-glutamate. This is Probable 4-aminobutyrate aminotransferase, mitochondrial (gta-1) from Caenorhabditis elegans.